Consider the following 334-residue polypeptide: Trans-1,2-dihydrobenzene-1,2-diol dehydrogenase (334 aa).

Belongs to the Gfo/Idh/MocA family. As to quaternary structure, homodimer.

The catalysed reaction is (1R,2R)-1,2-dihydrobenzene-1,2-diol + NADP(+) = catechol + NADPH + H(+). It carries out the reaction D-xylose + NADP(+) = D-xylono-1,5-lactone + NADPH + H(+). In Danio rerio (Zebrafish), this protein is Trans-1,2-dihydrobenzene-1,2-diol dehydrogenase (dhdh).